Consider the following 98-residue polypeptide: HssA/B-like protein 34 (98 aa).

2 disordered regions span residues 1–26 (MTLFSSISSMSSSMTSSRSSIASFGS) and 60–98 (AKSSGGSCGGKGGSHNHGHGHGHGPHGHGGKGSGGSCSC). The segment covering 60-72 (AKSSGGSCGGKGG) has biased composition (gly residues). A compositionally biased stretch (basic residues) spans 73-88 (SHNHGHGHGHGPHGHG). The segment covering 89–98 (GKGSGGSCSC) has biased composition (gly residues).

The protein belongs to the hssA/B family.

The sequence is that of HssA/B-like protein 34 (hssl34) from Dictyostelium discoideum (Social amoeba).